Consider the following 167-residue polypeptide: 6,7-dimethyl-8-ribityllumazine synthase (167 aa).

5-amino-6-(D-ribitylamino)uracil is bound by residues Phe-24, 58–60 (ALE), and 82–84 (AVV). 87-88 (ET) is a (2S)-2-hydroxy-3-oxobutyl phosphate binding site. Catalysis depends on His-90, which acts as the Proton donor. A 5-amino-6-(D-ribitylamino)uracil-binding site is contributed by Asn-115. Position 129 (Arg-129) interacts with (2S)-2-hydroxy-3-oxobutyl phosphate.

It belongs to the DMRL synthase family.

The enzyme catalyses (2S)-2-hydroxy-3-oxobutyl phosphate + 5-amino-6-(D-ribitylamino)uracil = 6,7-dimethyl-8-(1-D-ribityl)lumazine + phosphate + 2 H2O + H(+). It participates in cofactor biosynthesis; riboflavin biosynthesis; riboflavin from 2-hydroxy-3-oxobutyl phosphate and 5-amino-6-(D-ribitylamino)uracil: step 1/2. In terms of biological role, catalyzes the formation of 6,7-dimethyl-8-ribityllumazine by condensation of 5-amino-6-(D-ribitylamino)uracil with 3,4-dihydroxy-2-butanone 4-phosphate. This is the penultimate step in the biosynthesis of riboflavin. The protein is 6,7-dimethyl-8-ribityllumazine synthase of Cupriavidus pinatubonensis (strain JMP 134 / LMG 1197) (Cupriavidus necator (strain JMP 134)).